The sequence spans 201 residues: Bradykinin potentiating and C-type natriuretic peptides (201 aa).

Residues 1-23 (MFVSRLAASGLLLLALLAVSLDG) form the signal peptide. The propeptide occupies 24 to 47 (KPVQQWSQNWPGPKVPPLVVQQWS). Pyrrolidone carboxylic acid is present on Gln48. Residues 58-60 (LVV) constitute a propeptide that is removed on maturation. Gln61 carries the post-translational modification Pyrrolidone carboxylic acid. Propeptides lie at residues 67–95 (TQLQ…AALD) and 107–179 (GSKA…LAKK). The segment at 90 to 172 (PDAALDTPPA…GGGGGGGARR (83 aa)) is disordered. Low complexity predominate over residues 120 to 130 (SKGASATSTAS). The span at 132-142 (PMRDLRTDGKQ) shows a compositional bias: basic and acidic residues. Residues 159–170 (PGGGGGGGGGGA) are compositionally biased toward gly residues. Residues Cys185 and Cys201 are joined by a disulfide bond.

This sequence in the N-terminal section; belongs to the bradykinin-potentiating peptide family. In the central section; belongs to the bradykinin inhibitor peptide family. The protein in the C-terminal section; belongs to the natriuretic peptide family. As to expression, venom gland.

The protein localises to the secreted. Its function is as follows. Inhibits the activity of the angiotensin-converting enzyme (ACE) by a preferential interaction with its C-domain. May also potentiate the hypotensive effects of bradykinin. In terms of biological role, antagonizes the vasodilatory actions of bradykinin at the B2 bradykinin receptor. Has a vasorelaxant activity in rat aortic strips and a diuretic potency in anesthetized rats. May act by activating natriuretic receptors (NPR1 and/or NPR2). The protein is Bradykinin potentiating and C-type natriuretic peptides of Sistrurus catenatus edwardsii (Desert massasauga).